A 64-amino-acid polypeptide reads, in one-letter code: Potassium channel toxin kappa-KTx 3.1 (64 aa).

The signal sequence occupies residues 1–26 (MKSTLMTASVLILVLLSIVDYASVYA). A propeptide spanning residues 27 to 36 (EFIDSEISLE) is cleaved from the precursor. Cystine bridges form between Cys-43/Cys-61 and Cys-47/Cys-57.

This sequence belongs to the short scorpion toxin superfamily. Potassium channel inhibitor kappa-KTx family. Kappa-KTx 3 subfamily. In terms of tissue distribution, expressed by the venom gland.

The protein resides in the secreted. Potassium channel inhibitor (Kv). This Heterometrus petersii (Asian forest scorpion) protein is Potassium channel toxin kappa-KTx 3.1.